The chain runs to 549 residues: Hydroxylamine reductase (549 aa).

[4Fe-4S] cluster is bound by residues cysteine 5, cysteine 8, cysteine 17, and cysteine 23. Positions 244, 268, 312, 403, 431, 456, 491, and 493 each coordinate hybrid [4Fe-2O-2S] cluster. Cysteine 403 bears the Cysteine persulfide mark.

This sequence belongs to the HCP family. It depends on [4Fe-4S] cluster as a cofactor. Hybrid [4Fe-2O-2S] cluster serves as cofactor.

It localises to the cytoplasm. The catalysed reaction is A + NH4(+) + H2O = hydroxylamine + AH2 + H(+). In terms of biological role, catalyzes the reduction of hydroxylamine to form NH(3) and H(2)O. This Caldanaerobacter subterraneus subsp. tengcongensis (strain DSM 15242 / JCM 11007 / NBRC 100824 / MB4) (Thermoanaerobacter tengcongensis) protein is Hydroxylamine reductase.